The primary structure comprises 130 residues: MAKQVRKTGKKKEKKNIPEGIAHIQSTFNNTIITITDPIGNVIAWSSSGMQGFKGSRKSTPFAAQMAAEDCVKKAKEHGLRKVQVYVKGPGSGRESALRSLQAAGLTISLIRDVTPIPHNGCRPPKRRRV.

It belongs to the universal ribosomal protein uS11 family. As to quaternary structure, part of the 30S ribosomal subunit. Interacts with proteins S7 and S18. Binds to IF-3.

Functionally, located on the platform of the 30S subunit, it bridges several disparate RNA helices of the 16S rRNA. Forms part of the Shine-Dalgarno cleft in the 70S ribosome. In Syntrophus aciditrophicus (strain SB), this protein is Small ribosomal subunit protein uS11.